Reading from the N-terminus, the 532-residue chain is Flavin-containing monooxygenase 1 (532 aa).

The residue at position 2 (Ala-2) is an N-acetylalanine. The Lumenal segment spans residues 2–510 (AKRVAIVGAG…ARVVQESPSP (509 aa)). FAD contacts are provided by residues 9-13 (GAGVS), Glu-32, 40-41 (LW), and 61-62 (NS). NADP(+) is bound by residues 60-61 (SN) and 195-198 (SGTD). A helical membrane pass occupies residues 511–531 (FESFLKVFSFLALLVAIFLIF). Leu-532 is a topological domain (cytoplasmic).

The protein belongs to the FMO family. FAD serves as cofactor. In terms of tissue distribution, expressed mainly in fetal and adult liver.

The protein localises to the endoplasmic reticulum membrane. The enzyme catalyses hypotaurine + NADPH + O2 + H(+) = taurine + NADP(+) + H2O. It catalyses the reaction hypotaurine + NADH + O2 + H(+) = taurine + NAD(+) + H2O. The catalysed reaction is trimethylamine + NADPH + O2 = trimethylamine N-oxide + NADP(+) + H2O. It carries out the reaction N,N-dimethylaniline + NADPH + O2 + H(+) = N,N-dimethylaniline N-oxide + NADP(+) + H2O. In terms of biological role, broad spectrum monooxygenase that catalyzes the oxygenation of a wide variety of nitrogen- and sulfur-containing compounds including xenobiotics. Catalyzes the S-oxygenation of hypotaurine to produce taurine, an organic osmolyte involved in cell volume regulation as well as a variety of cytoprotective and developmental processes. In vitro, catalyzes the N-oxygenation of trimethylamine (TMA) to produce trimethylamine N-oxide (TMAO) and could therefore participate to the detoxification of this compound that is generated by the action of gut microbiota from dietary precursors such as choline, choline containing compounds, betaine or L-carnitine. This is Flavin-containing monooxygenase 1 from Homo sapiens (Human).